The sequence spans 504 residues: Maturase K (504 aa).

The protein belongs to the intron maturase 2 family. MatK subfamily.

It is found in the plastid. Its subcellular location is the chloroplast. Its function is as follows. Usually encoded in the trnK tRNA gene intron. Probably assists in splicing its own and other chloroplast group II introns. This Calyptranthes pallens (Spicewood) protein is Maturase K.